A 361-amino-acid chain; its full sequence is Chorismate synthase (361 aa).

Residues Arg-48 and Arg-54 each contribute to the NADP(+) site. FMN is bound by residues 125–127 (RSS), 238–239 (NA), Gly-278, 293–297 (KPTSS), and Arg-319.

This sequence belongs to the chorismate synthase family. As to quaternary structure, homotetramer. Requires FMNH2 as cofactor.

It carries out the reaction 5-O-(1-carboxyvinyl)-3-phosphoshikimate = chorismate + phosphate. It participates in metabolic intermediate biosynthesis; chorismate biosynthesis; chorismate from D-erythrose 4-phosphate and phosphoenolpyruvate: step 7/7. Functionally, catalyzes the anti-1,4-elimination of the C-3 phosphate and the C-6 proR hydrogen from 5-enolpyruvylshikimate-3-phosphate (EPSP) to yield chorismate, which is the branch point compound that serves as the starting substrate for the three terminal pathways of aromatic amino acid biosynthesis. This reaction introduces a second double bond into the aromatic ring system. The chain is Chorismate synthase from Klebsiella pneumoniae subsp. pneumoniae (strain ATCC 700721 / MGH 78578).